The sequence spans 819 residues: LPS-assembly protein LptD (819 aa).

An N-terminal signal peptide occupies residues 1–33; sequence MRQMKYQFKFNPLAAAIFTLLCGGSMQSSYADA.

This sequence belongs to the LptD family. In terms of assembly, component of the lipopolysaccharide transport and assembly complex. Interacts with LptE and LptA.

It is found in the cell outer membrane. In terms of biological role, together with LptE, is involved in the assembly of lipopolysaccharide (LPS) at the surface of the outer membrane. The protein is LPS-assembly protein LptD of Acinetobacter baylyi (strain ATCC 33305 / BD413 / ADP1).